We begin with the raw amino-acid sequence, 608 residues long: Ceramide kinase (608 aa).

Residues 160–367 form the DAGKc domain; the sequence is ERPRNLLVFV…LDAMQVVRWK (208 aa). ATP-binding positions include 170–174, Thr-201, and 230–236; these read HPKSG and GDGFFNE. 229-232 lines the substrate pocket; sequence GGDG. Catalysis depends on Asp-231, which acts as the Proton donor/acceptor. A disordered region spans residues 254-280; it reads PSDSFNSVQSRGSSSVPEPGDEVHETD. Polar residues predominate over residues 255 to 269; that stretch reads SDSFNSVQSRGSSSV. Position 329 (Ser-329) interacts with ATP.

Ca(2+) serves as cofactor.

It carries out the reaction an N-acylsphing-4-enine + ATP = an N-acylsphing-4-enine 1-phosphate + ADP + H(+). Functionally, catalyzes specifically the phosphorylation of ceramide to form ceramide 1-phosphate. Possesses high activity on ceramide analogs (C6, C8 synthetic ceramides) and lower activity on C6 and C8 dihydroceramides. Has weak activity on natural ceramides (a mixture of ceramides from bovine brain) and the synthetic substrate C2 ceramide. Has very poor activity on diacylglycerol and sphingosine. Ceramide is a critical sphingolipid metabolite that induces programmed cell death (PCD) in plants and ceramide-1-phosphate has a PCD suppressive effect. Thus, ceramide phosphorylation plays a role in the modulation of PCD and CERK activity is crucial for the maintenance of cell viability. The chain is Ceramide kinase (CERK) from Arabidopsis thaliana (Mouse-ear cress).